The sequence spans 58 residues: Large ribosomal subunit protein bL32 (58 aa).

The interval 1-24 (MAVPKKKTSKSKRDKRKATWKRKA) is disordered.

Belongs to the bacterial ribosomal protein bL32 family.

This is Large ribosomal subunit protein bL32 from Synechococcus sp. (strain ATCC 27144 / PCC 6301 / SAUG 1402/1) (Anacystis nidulans).